The following is a 150-amino-acid chain: Peptide methionine sulfoxide reductase MsrB (150 aa).

Residues 9-132 form the MsrB domain; the sequence is EAELKRTLTK…NSAALKFIPF (124 aa). Cys121 acts as the Nucleophile in catalysis.

This sequence belongs to the MsrB Met sulfoxide reductase family.

The catalysed reaction is L-methionyl-[protein] + [thioredoxin]-disulfide + H2O = L-methionyl-(R)-S-oxide-[protein] + [thioredoxin]-dithiol. The polypeptide is Peptide methionine sulfoxide reductase MsrB (Mycoplasma genitalium (strain ATCC 33530 / DSM 19775 / NCTC 10195 / G37) (Mycoplasmoides genitalium)).